Reading from the N-terminus, the 351-residue chain is Dihydroorotate dehydrogenase (quinone) (351 aa).

FMN contacts are provided by residues 67–71 and T91; that span reads AGFDK. Substrate is bound at residue K71. 116 to 120 is a binding site for substrate; it reads NAMGF. FMN is bound by residues N145 and N178. Residue N178 participates in substrate binding. The active-site Nucleophile is the S181. N183 lines the substrate pocket. FMN contacts are provided by K214 and T242. 243–244 contacts substrate; that stretch reads NT. Residues G262, G291, and 312 to 313 contribute to the FMN site; that span reads YS.

Belongs to the dihydroorotate dehydrogenase family. Type 2 subfamily. In terms of assembly, monomer. FMN serves as cofactor.

It is found in the cell membrane. The catalysed reaction is (S)-dihydroorotate + a quinone = orotate + a quinol. The protein operates within pyrimidine metabolism; UMP biosynthesis via de novo pathway; orotate from (S)-dihydroorotate (quinone route): step 1/1. In terms of biological role, catalyzes the conversion of dihydroorotate to orotate with quinone as electron acceptor. The protein is Dihydroorotate dehydrogenase (quinone) of Helicobacter acinonychis (strain Sheeba).